A 250-amino-acid polypeptide reads, in one-letter code: Flavin-dependent thymidylate synthase (250 aa).

Positions 7–233 (LSVELIACSS…PTVFGDFQVE (227 aa)) constitute a ThyX domain. DUMP contacts are provided by residues 92–95 (ELVR), 103–107 (QLSQR), and R172. Residues 95 to 97 (RHR) and Q103 each bind FAD. Positions 95-105 (RHRHFSFSQLS) match the ThyX motif motif. FAD contacts are provided by residues 188 to 190 (NFR) and H194. R199 is a dUMP binding site. R199 serves as the catalytic Involved in ionization of N3 of dUMP, leading to its activation.

Belongs to the thymidylate synthase ThyX family. Homotetramer. Requires FAD as cofactor.

The enzyme catalyses dUMP + (6R)-5,10-methylene-5,6,7,8-tetrahydrofolate + NADPH + H(+) = dTMP + (6S)-5,6,7,8-tetrahydrofolate + NADP(+). It participates in pyrimidine metabolism; dTTP biosynthesis. Catalyzes the reductive methylation of 2'-deoxyuridine-5'-monophosphate (dUMP) to 2'-deoxythymidine-5'-monophosphate (dTMP) while utilizing 5,10-methylenetetrahydrofolate (mTHF) as the methyl donor, and NADPH and FADH(2) as the reductant. The chain is Flavin-dependent thymidylate synthase from Corynebacterium efficiens (strain DSM 44549 / YS-314 / AJ 12310 / JCM 11189 / NBRC 100395).